Here is a 335-residue protein sequence, read N- to C-terminus: Serine/threonine-protein kinase crk1 (335 aa).

The Protein kinase domain occupies 11 to 292 (YVKERKVGEG…AQQALEHHYF (282 aa)). ATP is bound by residues 17 to 25 (VGEGTYAVV) and K40. D133 (proton acceptor) is an active-site residue. S162 carries the post-translational modification Phosphoserine. Phosphoserine; by CAK is present on S165. A Phosphoserine modification is found at S318.

Belongs to the protein kinase superfamily. CMGC Ser/Thr protein kinase family. CDC2/CDKX subfamily. As to quaternary structure, one of the nine subunits forming the core-TFIIH basal transcription factor. Interacts with mcs2 and tfb3.

The protein resides in the cytoplasm. Its subcellular location is the nucleus. The catalysed reaction is [DNA-directed RNA polymerase] + ATP = phospho-[DNA-directed RNA polymerase] + ADP + H(+). Functionally, protein kinase essential for cell proliferation, where it is required for completion of cytokinesis. Phosphorylates the C-terminal repeat domain (CTD) of RNA polymerase II. This Schizosaccharomyces pombe (strain 972 / ATCC 24843) (Fission yeast) protein is Serine/threonine-protein kinase crk1 (crk1).